The sequence spans 174 residues: uncharacterized protein (174 aa).

Belongs to the NAD(P)H dehydrogenase (quinone) family.

This is an uncharacterized protein from Bacillus subtilis (strain 168).